The sequence spans 290 residues: Porphobilinogen deaminase (290 aa).

At C237 the chain carries S-(dipyrrolylmethanemethyl)cysteine.

This sequence belongs to the HMBS family. As to quaternary structure, monomer. Requires dipyrromethane as cofactor.

It catalyses the reaction 4 porphobilinogen + H2O = hydroxymethylbilane + 4 NH4(+). It functions in the pathway porphyrin-containing compound metabolism; protoporphyrin-IX biosynthesis; coproporphyrinogen-III from 5-aminolevulinate: step 2/4. In terms of biological role, tetrapolymerization of the monopyrrole PBG into the hydroxymethylbilane pre-uroporphyrinogen in several discrete steps. The protein is Porphobilinogen deaminase of Clostridium botulinum (strain Loch Maree / Type A3).